Here is a 101-residue protein sequence, read N- to C-terminus: Urease subunit beta (101 aa).

It belongs to the urease beta subunit family. In terms of assembly, heterotrimer of UreA (gamma), UreB (beta) and UreC (alpha) subunits. Three heterotrimers associate to form the active enzyme.

The protein resides in the cytoplasm. It catalyses the reaction urea + 2 H2O + H(+) = hydrogencarbonate + 2 NH4(+). It functions in the pathway nitrogen metabolism; urea degradation; CO(2) and NH(3) from urea (urease route): step 1/1. The chain is Urease subunit beta from Variovorax paradoxus (strain S110).